Reading from the N-terminus, the 321-residue chain is Ribonucleoside-diphosphate reductase small subunit (321 aa).

Residues Asp-78, Glu-108, and His-111 each contribute to the Fe cation site. Tyr-115 is an active-site residue. Residues 165–185 traverse the membrane as a helical segment; that stretch reads ILMILIEGLFFASSFASIAYL. Residues Glu-171, Glu-205, and His-208 each contribute to the Fe cation site.

It belongs to the ribonucleoside diphosphate reductase small chain family. In terms of assembly, heterotetramer composed of a homodimer of the large subunit (R1) and a homodimer of the small subunit (R2). Larger multisubunit protein complex are also active, composed of (R1)n(R2)n. The cofactor is Fe cation.

It localises to the host membrane. It catalyses the reaction a 2'-deoxyribonucleoside 5'-diphosphate + [thioredoxin]-disulfide + H2O = a ribonucleoside 5'-diphosphate + [thioredoxin]-dithiol. Ribonucleoside-diphosphate reductase holoenzyme provides the precursors necessary for viral DNA synthesis. Allows virus growth in non-dividing cells, as well as reactivation from latency in infected hosts. Catalyzes the biosynthesis of deoxyribonucleotides from the corresponding ribonucleotides. This Equus caballus (Horse) protein is Ribonucleoside-diphosphate reductase small subunit.